The following is a 466-amino-acid chain: FAD-dependent monooxygenase dpfgE (466 aa).

A signal peptide spans 1–23 (MSQKPFRVIIVGGSVTGLTLAHS). The FAD site is built by Glu35, Gly49, and Arg108. 2 N-linked (GlcNAc...) asparagine glycosylation sites follow: Asn128 and Asn192. Asp312 and Ala325 together coordinate FAD. N-linked (GlcNAc...) asparagine glycosylation is present at Asn376. The chain crosses the membrane as a helical span at residues 443–465 (GVVRNVFFLLAATVIVAWVCRLW).

It belongs to the paxM FAD-dependent monooxygenase family. FAD serves as cofactor.

It is found in the membrane. The protein operates within secondary metabolite biosynthesis; terpenoid biosynthesis. Its function is as follows. FAD-dependent monooxygenase; part of the gene cluster that mediates the biosynthesis of diterpenoid pyrones. The first step of the pathway is the synthesis of the alpha-pyrone moiety by the polyketide synthase dpfgA via condensation of one acetyl-CoA starter unit with 3 malonyl-CoA units and 2 methylations. The alpha-pyrone is then combined with geranylgeranyl pyrophosphate (GGPP) formed by the GGPP synthase dpfgD through the action of the prenyltransferase dpfgC to yield a linear alpha-pyrone diterpenoid. Subsequent steps in the diterpenoid pyrone biosynthetic pathway involve the decalin core formation, which is initiated by the epoxidation of the C10-C11 olefin by the FAD-dependent oxidoreductase dpfgE, and is followed by a cyclization cascade catalyzed by the terpene cyclase dpfgB. The short chain dehydrogenase/reductase dpfgG then oxidizes the 8S hydroxy group to a ketone and the short chain dehydrogenase/reductase dpfgH reduces the ketone to the 8R hydroxy group to yield higginsianin B. Higginsianin B is further methylated by the methyltransferase dpfgI to produce the intermediate named FDDP B. The cytochrome P450 monooxygenase dfgpJ then catalyzes a three-step oxidation at C-27 to generate a carboxylic acid as well as C-26 hydroxylation. Finally, methyltransferase dpfgK methylates the carboxylic acid generated by dpfgJ, yielding the final diterpenoid pyrones from the pathway which were named FDDP D and FDDP E. The sequence is that of FAD-dependent monooxygenase dpfgE from Gibberella zeae (strain ATCC MYA-4620 / CBS 123657 / FGSC 9075 / NRRL 31084 / PH-1) (Wheat head blight fungus).